We begin with the raw amino-acid sequence, 156 residues long: 6,7-dimethyl-8-ribityllumazine synthase (156 aa).

5-amino-6-(D-ribitylamino)uracil is bound by residues Phe-22, 57–59 (AVE), and 81–83 (SVI). A (2S)-2-hydroxy-3-oxobutyl phosphate-binding site is contributed by 86-87 (GT). The active-site Proton donor is His-89. 5-amino-6-(D-ribitylamino)uracil is bound at residue Phe-114. Arg-128 provides a ligand contact to (2S)-2-hydroxy-3-oxobutyl phosphate.

Belongs to the DMRL synthase family. Forms an icosahedral capsid composed of 60 subunits, arranged as a dodecamer of pentamers.

The enzyme catalyses (2S)-2-hydroxy-3-oxobutyl phosphate + 5-amino-6-(D-ribitylamino)uracil = 6,7-dimethyl-8-(1-D-ribityl)lumazine + phosphate + 2 H2O + H(+). Its pathway is cofactor biosynthesis; riboflavin biosynthesis; riboflavin from 2-hydroxy-3-oxobutyl phosphate and 5-amino-6-(D-ribitylamino)uracil: step 1/2. In terms of biological role, catalyzes the formation of 6,7-dimethyl-8-ribityllumazine by condensation of 5-amino-6-(D-ribitylamino)uracil with 3,4-dihydroxy-2-butanone 4-phosphate. This is the penultimate step in the biosynthesis of riboflavin. The sequence is that of 6,7-dimethyl-8-ribityllumazine synthase from Aliivibrio salmonicida (strain LFI1238) (Vibrio salmonicida (strain LFI1238)).